The primary structure comprises 434 residues: Serine hydroxymethyltransferase (434 aa).

Residues leucine 133 and 137–139 each bind (6S)-5,6,7,8-tetrahydrofolate; that span reads GHL. Lysine 242 bears the N6-(pyridoxal phosphate)lysine mark.

This sequence belongs to the SHMT family. In terms of assembly, homodimer. Pyridoxal 5'-phosphate serves as cofactor.

The protein resides in the cytoplasm. It carries out the reaction (6R)-5,10-methylene-5,6,7,8-tetrahydrofolate + glycine + H2O = (6S)-5,6,7,8-tetrahydrofolate + L-serine. The protein operates within one-carbon metabolism; tetrahydrofolate interconversion. Its pathway is amino-acid biosynthesis; glycine biosynthesis; glycine from L-serine: step 1/1. In terms of biological role, catalyzes the reversible interconversion of serine and glycine with tetrahydrofolate (THF) serving as the one-carbon carrier. This reaction serves as the major source of one-carbon groups required for the biosynthesis of purines, thymidylate, methionine, and other important biomolecules. Also exhibits THF-independent aldolase activity toward beta-hydroxyamino acids, producing glycine and aldehydes, via a retro-aldol mechanism. The sequence is that of Serine hydroxymethyltransferase from Methylorubrum extorquens (strain CM4 / NCIMB 13688) (Methylobacterium extorquens).